A 411-amino-acid chain; its full sequence is Peptidase T (411 aa).

H79 provides a ligand contact to Zn(2+). The active site involves D81. D142 is a Zn(2+) binding site. E176 acts as the Proton acceptor in catalysis. Zn(2+) is bound by residues E177, D199, and H381.

Belongs to the peptidase M20B family. It depends on Zn(2+) as a cofactor.

Its subcellular location is the cytoplasm. It catalyses the reaction Release of the N-terminal residue from a tripeptide.. Functionally, cleaves the N-terminal amino acid of tripeptides. The protein is Peptidase T of Geobacillus thermodenitrificans (strain NG80-2).